Consider the following 172-residue polypeptide: Large ribosomal subunit protein uL10 (172 aa).

The protein belongs to the universal ribosomal protein uL10 family. As to quaternary structure, part of the ribosomal stalk of the 50S ribosomal subunit. The N-terminus interacts with L11 and the large rRNA to form the base of the stalk. The C-terminus forms an elongated spine to which L12 dimers bind in a sequential fashion forming a multimeric L10(L12)X complex.

In terms of biological role, forms part of the ribosomal stalk, playing a central role in the interaction of the ribosome with GTP-bound translation factors. The protein is Large ribosomal subunit protein uL10 of Francisella tularensis subsp. holarctica (strain FTNF002-00 / FTA).